A 272-amino-acid chain; its full sequence is Tryptophan synthase alpha chain (272 aa).

Active-site proton acceptor residues include glutamate 53 and aspartate 64.

This sequence belongs to the TrpA family. As to quaternary structure, tetramer of two alpha and two beta chains.

It carries out the reaction (1S,2R)-1-C-(indol-3-yl)glycerol 3-phosphate + L-serine = D-glyceraldehyde 3-phosphate + L-tryptophan + H2O. Its pathway is amino-acid biosynthesis; L-tryptophan biosynthesis; L-tryptophan from chorismate: step 5/5. Its function is as follows. The alpha subunit is responsible for the aldol cleavage of indoleglycerol phosphate to indole and glyceraldehyde 3-phosphate. The chain is Tryptophan synthase alpha chain from Xanthomonas campestris pv. campestris (strain 8004).